The primary structure comprises 387 residues: EARP and GARP complex-interacting protein 1 (387 aa).

An N-acetylmethionine modification is found at Met-1. WD repeat units lie at residues 132–172 (TAHS…SQAV), 180–222 (GGKG…QIYC), 226–266 (AHGQ…EPVK), and 270–310 (EHSH…SEPF). Residues 310 to 334 (FGHLVDDDDISDQEDHRSEEKSKEP) are disordered. Ser-320 is subject to Phosphoserine. Residues 322 to 334 (QEDHRSEEKSKEP) show a composition bias toward basic and acidic residues. A WD 5 repeat occupies 345 to 385 (EHEDSVYAVDWSSADPWLFASLSYDGRLVINRVPRALKYHI).

It belongs to the WD repeat EIPR1 family. Interacts with two multisubunit tethering complexes: EARP composed of VPS50, VPS51, VPS52 and VPS53 subunits and GARP complex composed of VPS51, VPS52, VPS53 and VPS54 subunits. Interacts with SNAP29.

It localises to the golgi apparatus. The protein resides in the trans-Golgi network. Functionally, acts as a component of endosomal retrieval machinery that is involved in protein transport from early endosomes to either recycling endosomes or the trans-Golgi network. Mediates the recruitment of Golgi-associated retrograde protein (GARP) complex to the trans-Golgi network and controls early endosome-to-Golgi transport of internalized protein. Promotes the recycling of internalized transferrin receptor (TFRC) to the plasma membrane through interaction with endosome-associated recycling protein (EARP) complex. Controls proper insulin distribution and secretion, and retention of cargo in mature dense core vesicles. Required for the stability of the endosome-associated retrograde protein (EARP) complex subunits and for proper localization and association of EARP with membranes. This is EARP and GARP complex-interacting protein 1 from Macaca fascicularis (Crab-eating macaque).